A 256-amino-acid chain; its full sequence is Imidazole glycerol phosphate synthase subunit HisF (256 aa).

Active-site residues include D11 and D130.

The protein belongs to the HisA/HisF family. Heterodimer of HisH and HisF.

The protein localises to the cytoplasm. It catalyses the reaction 5-[(5-phospho-1-deoxy-D-ribulos-1-ylimino)methylamino]-1-(5-phospho-beta-D-ribosyl)imidazole-4-carboxamide + L-glutamine = D-erythro-1-(imidazol-4-yl)glycerol 3-phosphate + 5-amino-1-(5-phospho-beta-D-ribosyl)imidazole-4-carboxamide + L-glutamate + H(+). It participates in amino-acid biosynthesis; L-histidine biosynthesis; L-histidine from 5-phospho-alpha-D-ribose 1-diphosphate: step 5/9. In terms of biological role, IGPS catalyzes the conversion of PRFAR and glutamine to IGP, AICAR and glutamate. The HisF subunit catalyzes the cyclization activity that produces IGP and AICAR from PRFAR using the ammonia provided by the HisH subunit. This is Imidazole glycerol phosphate synthase subunit HisF from Prochlorococcus marinus (strain MIT 9312).